Here is a 212-residue protein sequence, read N- to C-terminus: Putative 3-methyladenine DNA glycosylase (212 aa).

It belongs to the DNA glycosylase MPG family.

This chain is Putative 3-methyladenine DNA glycosylase, found in Psychrobacter cryohalolentis (strain ATCC BAA-1226 / DSM 17306 / VKM B-2378 / K5).